The sequence spans 97 residues: Secreted transmembrane peptide 4 (97 aa).

The first 33 residues, 1–33 (MTKNMTKKKMGLMSPNIAAFVLPMLLVLFTISS), serve as a signal peptide directing secretion. Residues 54-67 (IVFTPPSSSCGGSP) carry the SCOOP motif motif. Residues 60 to 62 (SSS) carry the SxS motif essential for MIK2 binding motif. Positions 75-97 (WMPRRPCRRTRPPGTNIPVSQSP) are disordered.

It belongs to the serine rich endogenous peptide (SCOOP) phytocytokine family. Interacts with MIK2 (via extracellular leucine-rich repeat domain); this interaction triggers the formation of complex between MIK2 and the BAK1/SERK3 and SERK4 coreceptors, and subsequent BAK1 activation by phosphorylation. As to expression, mostly expressed in leaves and stems, and, to a lower extent, in roots, siliques, seeds and flowers.

Its subcellular location is the cell membrane. The protein localises to the secreted. It localises to the extracellular space. It is found in the apoplast. Functionally, brassicaceae-specific phytocytokine (plant endogenous peptide released into the apoplast) perceived by MIK2 in a BAK1/SERK3 and SERK4 coreceptors-dependent manner, that modulates various physiological and antimicrobial processes including growth prevention and reactive oxygen species (ROS) response regulation. Prevents general growth and development. The polypeptide is Secreted transmembrane peptide 4 (Arabidopsis thaliana (Mouse-ear cress)).